A 326-amino-acid polypeptide reads, in one-letter code: Vomeronasal type-1 receptor 94 (326 aa).

Residues 1–32 (MSEILLFSPQPLFSYTMNKYSRLYTNSNIRNT) are Extracellular-facing. Residues 33–53 (FFSEIGIGIAANSLLLLFHIF) traverse the membrane as a helical segment. At 54–65 (KFIRGQRSRLTD) the chain is on the cytoplasmic side. A helical transmembrane segment spans residues 66–86 (LPIGLLSLIHLLKLLMIAFIA). The Extracellular segment spans residues 87 to 110 (TDIFISWRGWDDIICKFLVYLYRS). A disulfide bridge links cysteine 101 with cysteine 188. The chain crosses the membrane as a helical span at residues 111–130 (FRGLSLCTTCMLSVLQAITL). Topologically, residues 131–150 (SPRSSCLAKFKHKSPHHVSC) are cytoplasmic. Residues 151–171 (AILSLSVLYMFISSHLLVSLI) traverse the membrane as a helical segment. The Extracellular segment spans residues 172 to 203 (ATPNLTTNVFMYVSESCSILPMSYLMQSMFST). Asparagine 175 is a glycosylation site (N-linked (GlcNAc...) asparagine). A helical membrane pass occupies residues 204–224 (LLAIRDVFLISLMVLSTCYMV). At 225–254 (ALLCRHRKQTRHLQGTSLSPKASPEKKATH) the chain is on the cytoplasmic side. Residues 255-275 (SILMLMSFFVLMSILDSIVSC) traverse the membrane as a helical segment. The Extracellular segment spans residues 276 to 285 (SRTMFLYDPT). A helical membrane pass occupies residues 286 to 306 (SYAIQIFVSHIYATVSPFVFM). At 307 to 326 (SNEKHIVNFLRSLCKRVINV) the chain is on the cytoplasmic side.

The protein belongs to the G-protein coupled receptor 1 family.

The protein resides in the cell membrane. Functionally, putative pheromone receptor implicated in the regulation of social as well as reproductive behavior. This chain is Vomeronasal type-1 receptor 94 (Vom1r94), found in Rattus norvegicus (Rat).